We begin with the raw amino-acid sequence, 62 residues long: Temporin-La (62 aa).

Positions M1–C22 are cleaved as a signal peptide. A propeptide spanning residues E23–R47 is cleaved from the precursor. L60 carries the leucine amide modification.

It belongs to the frog skin active peptide (FSAP) family. Temporin subfamily. Expressed by the skin glands.

It localises to the secreted. It is found in the target cell membrane. In terms of biological role, antimicrobial peptide with amphipathic alpha-helical structure that acts against both Gram-positive and Gram-negative bacteria and the fungus Candida albicans. Is active against S.aureus ATCC 25923 (MIC=2.5 ug/ml), S.suis 2 CVCC 606 (MIC=15.6 ug/ml), Salmonella ATCC 20020 (MIC=15.6 ug/ml), P.aeruginosa ATCC 227853 (MIC=60 ug/ml), and C.albicans ATCC10231 (MIC=31.25 ug/ml). Is not active against B.subtilis ADB403, E.coli ATCC 25922, and K.pneumoniae ATCC 700603. Also shows a strong antitumor activity, but no hemolytic activity. This is Temporin-La from Aquarana catesbeiana (American bullfrog).